Consider the following 149-residue polypeptide: Large ribosomal subunit protein eL24B (149 aa).

A Phosphoserine modification is found at S50. Residues 96-149 (QRPEVRAAARAAALKQRKDKRAASESEKKAIKAKSAASSARGQAIKNAKVAARR) are disordered. Residues 116–125 (RAASESEKKA) are compositionally biased toward basic and acidic residues.

This sequence belongs to the eukaryotic ribosomal protein eL24 family. Component of the large ribosomal subunit (LSU). Mature yeast ribosomes consist of a small (40S) and a large (60S) subunit. The 40S small subunit contains 1 molecule of ribosomal RNA (18S rRNA) and at least 33 different proteins. The large 60S subunit contains 3 rRNA molecules (25S, 5.8S and 5S rRNA) and at least 46 different proteins.

It is found in the cytoplasm. Component of the ribosome, a large ribonucleoprotein complex responsible for the synthesis of proteins in the cell. The small ribosomal subunit (SSU) binds messenger RNAs (mRNAs) and translates the encoded message by selecting cognate aminoacyl-transfer RNA (tRNA) molecules. The large subunit (LSU) contains the ribosomal catalytic site termed the peptidyl transferase center (PTC), which catalyzes the formation of peptide bonds, thereby polymerizing the amino acids delivered by tRNAs into a polypeptide chain. The nascent polypeptides leave the ribosome through a tunnel in the LSU and interact with protein factors that function in enzymatic processing, targeting, and the membrane insertion of nascent chains at the exit of the ribosomal tunnel. The protein is Large ribosomal subunit protein eL24B (rpl2402) of Schizosaccharomyces pombe (strain 972 / ATCC 24843) (Fission yeast).